A 127-amino-acid chain; its full sequence is Small ribosomal subunit protein bS6 (127 aa).

A compositionally biased stretch (basic and acidic residues) spans 106 to 117 (ERKAQSEKKEAE). Positions 106–127 (ERKAQSEKKEAEVSEGEGGTEA) are disordered. A compositionally biased stretch (acidic residues) spans 118–127 (VSEGEGGTEA).

The protein belongs to the bacterial ribosomal protein bS6 family.

Binds together with bS18 to 16S ribosomal RNA. This chain is Small ribosomal subunit protein bS6, found in Thermotoga neapolitana (strain ATCC 49049 / DSM 4359 / NBRC 107923 / NS-E).